A 264-amino-acid chain; its full sequence is S-adenosylmethionine decarboxylase proenzyme (264 aa).

The Schiff-base intermediate with substrate; via pyruvic acid role is filled by S113. A Pyruvic acid (Ser); by autocatalysis modification is found at S113. H118 acts as the Proton acceptor; for processing activity in catalysis. C141 (proton donor; for catalytic activity) is an active-site residue.

Belongs to the prokaryotic AdoMetDC family. Type 2 subfamily. In terms of assembly, heterooctamer of four alpha and four beta chains arranged as a tetramer of alpha/beta heterodimers. Requires pyruvate as cofactor. In terms of processing, is synthesized initially as an inactive proenzyme. Formation of the active enzyme involves a self-maturation process in which the active site pyruvoyl group is generated from an internal serine residue via an autocatalytic post-translational modification. Two non-identical subunits are generated from the proenzyme in this reaction, and the pyruvate is formed at the N-terminus of the alpha chain, which is derived from the carboxyl end of the proenzyme. The post-translation cleavage follows an unusual pathway, termed non-hydrolytic serinolysis, in which the side chain hydroxyl group of the serine supplies its oxygen atom to form the C-terminus of the beta chain, while the remainder of the serine residue undergoes an oxidative deamination to produce ammonia and the pyruvoyl group blocking the N-terminus of the alpha chain.

It catalyses the reaction S-adenosyl-L-methionine + H(+) = S-adenosyl 3-(methylsulfanyl)propylamine + CO2. The protein operates within amine and polyamine biosynthesis; S-adenosylmethioninamine biosynthesis; S-adenosylmethioninamine from S-adenosyl-L-methionine: step 1/1. In terms of biological role, catalyzes the decarboxylation of S-adenosylmethionine to S-adenosylmethioninamine (dcAdoMet), the propylamine donor required for the synthesis of the polyamines spermine and spermidine from the diamine putrescine. This chain is S-adenosylmethionine decarboxylase proenzyme, found in Pseudomonas aeruginosa (strain UCBPP-PA14).